A 247-amino-acid polypeptide reads, in one-letter code: PF03932 family protein CutC (247 aa).

Over residues 205-222 the composition is skewed to polar residues; that stretch reads KSTRPSLMESNSSAQMGS. The segment at 205–226 is disordered; it reads KSTRPSLMESNSSAQMGSNDVD.

This sequence belongs to the CutC family.

The protein localises to the cytoplasm. The chain is PF03932 family protein CutC from Vibrio atlanticus (strain LGP32) (Vibrio splendidus (strain Mel32)).